We begin with the raw amino-acid sequence, 566 residues long: UvrABC system protein C (566 aa).

The 78-residue stretch at 16 to 93 (EKPGVYLFKK…IQQYKPRYNV (78 aa)) folds into the GIY-YIG domain. Residues 199-234 (AEVLPKLYEKIEEFSKELMFEKCAHIRDQIIALENL) form the UVR domain.

Belongs to the UvrC family. As to quaternary structure, interacts with UvrB in an incision complex.

The protein localises to the cytoplasm. The UvrABC repair system catalyzes the recognition and processing of DNA lesions. UvrC both incises the 5' and 3' sides of the lesion. The N-terminal half is responsible for the 3' incision and the C-terminal half is responsible for the 5' incision. The sequence is that of UvrABC system protein C from Aquifex aeolicus (strain VF5).